A 212-amino-acid chain; its full sequence is 3-isopropylmalate dehydratase small subunit (212 aa).

It belongs to the LeuD family. LeuD type 1 subfamily. In terms of assembly, heterodimer of LeuC and LeuD.

It carries out the reaction (2R,3S)-3-isopropylmalate = (2S)-2-isopropylmalate. Its pathway is amino-acid biosynthesis; L-leucine biosynthesis; L-leucine from 3-methyl-2-oxobutanoate: step 2/4. In terms of biological role, catalyzes the isomerization between 2-isopropylmalate and 3-isopropylmalate, via the formation of 2-isopropylmaleate. The chain is 3-isopropylmalate dehydratase small subunit from Thioalkalivibrio sulfidiphilus (strain HL-EbGR7).